A 96-amino-acid chain; its full sequence is NADH-ubiquinone oxidoreductase chain 4L (96 aa).

A run of 3 helical transmembrane segments spans residues 1–21 (MPTT…SLQR), 27–47 (LLLT…LWAL), and 57–77 (APLI…SLMI).

Belongs to the complex I subunit 4L family.

The protein localises to the mitochondrion membrane. It carries out the reaction a ubiquinone + NADH + 5 H(+)(in) = a ubiquinol + NAD(+) + 4 H(+)(out). Its function is as follows. Core subunit of the mitochondrial membrane respiratory chain NADH dehydrogenase (Complex I) which catalyzes electron transfer from NADH through the respiratory chain, using ubiquinone as an electron acceptor. Part of the enzyme membrane arm which is embedded in the lipid bilayer and involved in proton translocation. The chain is NADH-ubiquinone oxidoreductase chain 4L (MT-ND4L) from Petromyzon marinus (Sea lamprey).